An 846-amino-acid polypeptide reads, in one-letter code: Outer membrane channel protein CpnT (846 aa).

Residues 1–443 are NTD; it reads MAPLAVDPAA…AGVRGLKERL (443 aa). The segment at 442–630 is disordered; that stretch reads RLEPTTPHLE…SGSEPPGLHA (189 aa). Pro residues-rich tracts occupy residues 450–466 and 475–504; these read LEPPATPPRPGPQPPRI and APAPAAKPAPVPANGPLPHSPTESKPPPVD. 2 stretches are compositionally biased toward low complexity: residues 508 to 517 and 562 to 586; these read EPVAPSSASA and APATAHQPQWATTPAAPAAAPHSTP. The tract at residues 651–846 is TNT; sequence RLSDEAVDPQ…ELIRRGVLRQ (196 aa). The TNT domain maps to 751–846; sequence YGPQLDRIGG…ELIRRGVLRQ (96 aa). Arg757 is an active-site residue. Residue Arg780 participates in NAD(+) binding. The active site involves Gln822.

As to quaternary structure, interacts with the immunity factor for TNT (IFT) homolog. Post-translationally, the C-terminal domain (TNT) is probably cleaved.

The protein resides in the cell outer membrane. It localises to the secreted. It is found in the cell surface. It catalyses the reaction NAD(+) + H2O = ADP-D-ribose + nicotinamide + H(+). Glycohydrolase activity is completely inhibited by interaction with the immunity factor for TNT (IFT) homolog. This inhibition protects M.bovis from self-poisoning. Its function is as follows. The N-terminal domain (NTD) forms an outer membrane channel and is used for uptake of nutrients across the outer membrane. Also confers susceptibility to structurally different antibiotics and antituberculosis drugs, and to toxic immune factors such as nitric oxide (NO). The C-terminal domain (TNT) is dispensable for normal growth in macrophages. The sequence is that of Outer membrane channel protein CpnT from Mycobacterium bovis (strain BCG / Pasteur 1173P2).